A 1187-amino-acid chain; its full sequence is MGRIKENQSKKKTLLRDSKAYSDQAAAAVTSSDDGFDEPKEITAPKRKLPCGNSDAKKKKFKHPEANVKPPTLEEIKEIRDTRNLFHSNLFKLQVKEMLEELQLKPKYSNYIENWLETFTTAVHEFQDGLLDNCQLEVPLHLHKKLFNFQFLTPTAEPKLIGAAAIGTLLGPKLVVDVALEMPEKCFQKEDYRNLIFDQKRALYLATVASKLKELPACAADHFAYNYHANNPLKPVLELTPTGKIGKHLSLRLYITAPKAIFKLSRFVPWNNNVRPSFFGDKWDESETLPSTQHYNANVLFDLTLAENQKLLLSTFSGHRNFQEGLLLLKVWLRQRQLDVGFSGFSAHILAAYIVYLKQNRLLHQSSSSYQVARTVWNQLANSDWTQGITLCPQQPHQLSTLAGYYDVCFMDVTGYYNICANLPLSVYKAVCAEAKLAVELLNDVRVNSFSQIFMQASPLYTRMDNILKITNPATVDQLLELHVQPQVKYDYANYAHPQLLKLLTDLLQKGLGKRVHAILPLETASKSWTVDTKAPIIGRSLTLGLILDPEHAFEVLDKGPATNEDAEGAAEFRKFWGEKSNLRRFQDGSITEAVVWAAVTDAPSKKRLIVRQIVLHLLEQHLQLEQSDVHYIAGELDIIYSLTSSFKVAKLQTKLKLEQETDAEAVTPLVIHCYDALARQLHTLGDLPLDIVSISGISPVFRYCEPQPLLPQARLVADRMHAGHVLRVIIQLGPSGKWPNELGALRSLKTAFLIQIGKQLKEQQHLHTQLCKEGLLVLKQGYCFLLELAHTKEVALLKQQQTERGVTAYVDNAASREIERRHYILPRVSGALHALHQSHSTFGPTVLIAKRWLATQMIDDGLWPSIATELLVAHLFQQRQMPHTTVAPQTGFIRFLQLLAHSDWASELFLLNFNNSWTEQQITDLEHSYRSERDSYPALCLATAYDQQHAGRLWTTDDCPSKPVLGRVTLLARHALQLIESSLLSPSLGFVRPAQLFIASGEGYDLVIELKPDLLPNTLCYDLGSPFLPFSQRNFRLPLAGIDQLAKIVQQLRSAYSEYAAFFYNPHGGKELAIVWRPASEFAPKPFKVNELQACTPCSVGKVQVVRDTLVEDFKLLLKDFYLRICTPEQLKREQRSHNKPKRYFDDQSEPDVDKPQKKKKKKGTVTKPTDLKKRLKKSKSLSALC.

Over residues methionine 1–alanine 20 the composition is skewed to basic and acidic residues. Disordered stretches follow at residues methionine 1–proline 64 and arginine 1134–cysteine 1187.

The protein belongs to the NRAP family. As to quaternary structure, part of the small subunit (SSU) processome, composed of more than 70 proteins and the RNA chaperone small nucleolar RNA (snoRNA) U3.

The protein resides in the nucleus. It is found in the nucleolus. It localises to the chromosome. Part of the small subunit (SSU) processome, first precursor of the small eukaryotic ribosomal subunit. During the assembly of the SSU processome in the nucleolus, many ribosome biogenesis factors, an RNA chaperone and ribosomal proteins associate with the nascent pre-rRNA and work in concert to generate RNA folding, modifications, rearrangements and cleavage as well as targeted degradation of pre-ribosomal RNA by the RNA exosome. The sequence is that of Nucleolar protein 6 from Drosophila mojavensis (Fruit fly).